The following is a 2407-amino-acid chain: Daf-12-interacting protein 1 (2407 aa).

The span at glutamine 90 to alanine 112 shows a compositional bias: low complexity. The tract at residues glutamine 90–arginine 152 is disordered. An RRM domain is found at cysteine 277–asparagine 335. 11 disordered regions span residues glutamate 439–aspartate 632, alanine 737–leucine 767, leucine 785–alanine 849, proline 874–valine 896, leucine 921–alanine 986, arginine 993–valine 1012, serine 1025–glutamate 1844, isoleucine 1858–histidine 1918, leucine 1932–aspartate 1976, glutamate 2077–alanine 2103, and serine 2172–asparagine 2200. Residues arginine 443–glycine 456 show a composition bias toward polar residues. Acidic residues predominate over residues glutamate 512 to valine 529. Basic and acidic residues-rich tracts occupy residues serine 530–lysine 541, glycine 548–glutamate 564, and serine 573–glutamate 586. Residues alanine 587–proline 603 show a composition bias toward polar residues. Residues serine 618–serine 627 show a composition bias toward low complexity. 2 stretches are compositionally biased toward polar residues: residues threonine 791 to serine 826 and serine 837 to alanine 849. Residues alanine 924 to glycine 946 are compositionally biased toward polar residues. Residues serine 966–isoleucine 978 show a composition bias toward basic and acidic residues. A compositionally biased stretch (polar residues) spans serine 1043–glutamine 1052. A compositionally biased stretch (low complexity) spans proline 1053–histidine 1070. A compositionally biased stretch (basic and acidic residues) spans lysine 1086–lysine 1153. Acidic residues predominate over residues serine 1165 to aspartate 1177. 6 stretches are compositionally biased toward basic and acidic residues: residues leucine 1178 to glutamine 1195, arginine 1218 to glutamine 1227, alanine 1279 to glutamate 1293, asparagine 1304 to asparagine 1320, glutamine 1335 to alanine 1355, and arginine 1376 to aspartate 1398. Composition is skewed to low complexity over residues proline 1456 to serine 1471 and threonine 1488 to serine 1498. The span at serine 1534–glycine 1547 shows a compositional bias: polar residues. Over residues serine 1570–aspartate 1595 the composition is skewed to low complexity. Composition is skewed to basic and acidic residues over residues serine 1679–serine 1691 and glutamate 1703–glutamine 1726. A compositionally biased stretch (polar residues) spans threonine 1749–glutamine 1770. Positions asparagine 1792–lysine 1805 are enriched in basic and acidic residues. Residues proline 1809 to histidine 1826 are compositionally biased toward polar residues. Composition is skewed to basic and acidic residues over residues alanine 1827–glutamate 1836 and glutamate 1873–glutamate 1892. 2 stretches are compositionally biased toward polar residues: residues glutamate 1895 to threonine 1911 and leucine 1932 to glutamine 1942. Low complexity predominate over residues serine 1962–serine 1975. Residues asparagine 2049–alanine 2110 are a coiled coil. Basic and acidic residues predominate over residues glutamate 2077–arginine 2099. Over residues proline 2176 to proline 2186 the composition is skewed to low complexity. The 171-residue stretch at glutamine 2213–asparagine 2383 folds into the SPOC domain.

In terms of assembly, isoform d interacts with daf-12. In terms of tissue distribution, isoform d is widely expressed: detected in the hypodermis, seam cells, intestine, somatic gonad, neurons, vulval precursors, body wall muscle and pharynx.

The protein localises to the nucleus. Its function is as follows. Probable transcriptional corepressor which modulates activity of the nuclear hormone receptor daf-12 to regulate the dauer diapause. The polypeptide is Daf-12-interacting protein 1 (Caenorhabditis elegans).